The following is a 1928-amino-acid chain: Lactase/phlorizin hydrolase (1928 aa).

Positions 1–21 (MELPWTALFLSTVLLGLSCQG) are cleaved as a signal peptide. A propeptide spans 22-867 (SDWESDRNFI…LPVRADFTSR (846 aa)) (XBetaGly). Residues 22–1883 (SDWESDRNFI…LMLGIAEAQT (1862 aa)) lie on the Extracellular side of the membrane. The glycosyl hydrolase-1 1; Region I stretch occupies residues 46 to 289 (NYPPGKQGSD…FIYTLKLEDC (244 aa)). Residues 364-856 (VWAAFANQSR…GFSAKKVKRN (493 aa)) form a glycosyl hydrolase-1 2; Region II region. N-linked (GlcNAc...) asparagine glycosylation is found at Asn-370, Asn-514, Asn-824, Asn-936, Asn-948, Asn-991, and Asn-1037. A glycosyl hydrolase-1 3; Region III. Phlorizin hydrolase/Glycosylceramidase activity region spans residues 904–1367 (RFRDDFLWGV…DLIANNGMPL (464 aa)). The Proton donor; for phlorizin hydrolase/Glycosylceramidase activity role is filled by Glu-1067. Asn-1176 and Asn-1240 each carry an N-linked (GlcNAc...) asparagine glycan. The active-site Nucleophile; for phlorizin hydrolase/Glycosylceramidase activity is Glu-1274. N-linked (GlcNAc...) asparagine glycans are attached at residues Asn-1281 and Asn-1509. The glycosyl hydrolase-1 4; Region IV. Lactase activity stretch occupies residues 1374–1847 (LYGEFPKGFI…CNGFPDPAQG (474 aa)). The active-site Proton donor; for lactase activity is Glu-1539. N-linked (GlcNAc...) asparagine glycans are attached at residues Asn-1657 and Asn-1684. Glu-1750 functions as the Nucleophile; for lactase activity in the catalytic mechanism. 2 N-linked (GlcNAc...) asparagine glycosylation sites follow: Asn-1762 and Asn-1815. Residues 1884 to 1902 (ALYVLFALLLLGACSLAFL) traverse the membrane as a helical segment. Residues 1903-1928 (TYNTGRRSKQGNAQPSQHQLSPISSF) are Cytoplasmic-facing.

Belongs to the glycosyl hydrolase 1 family. In terms of assembly, homodimer. Post-translationally, N-glycosylated. Intestine.

The protein localises to the apical cell membrane. The catalysed reaction is lactose + H2O = beta-D-galactose + D-glucose. The enzyme catalyses phlorizin + H2O = phloretin + beta-D-glucose. It catalyses the reaction D-cellobiose + H2O = beta-D-glucose + D-glucose. It carries out the reaction quercetin 4'-O-beta-D-glucoside + H2O = quercetin + beta-D-glucose. The catalysed reaction is quercetin 3-O-beta-D-glucoside + H2O = quercetin + beta-D-glucose. The enzyme catalyses kaempferol 3-O-beta-D-glucoside + H2O = kaempferol + beta-D-glucose. It catalyses the reaction luteolin 7-O-beta-D-glucoside + H2O = luteolin + beta-D-glucose. It carries out the reaction luteolin 4'-O-beta-D-glucoside + H2O = luteolin + beta-D-glucose. The catalysed reaction is (2S)-naringenin 7-O-beta-D-glucoside + H2O = (2S)-naringenin + beta-D-glucose. The enzyme catalyses eriodictyol-7-O-beta-D-glucoside + H2O = (S)-eriodictyol + beta-D-glucose. It catalyses the reaction apigenin 7-O-beta-D-glucoside + H2O = apigenin + beta-D-glucose. It carries out the reaction daidzein 7-O-beta-D-glucoside + H2O = daidzein + beta-D-glucose + H(+). The catalysed reaction is genistein 7-O-beta-D-glucoside + H2O = genistein + beta-D-glucose. The enzyme catalyses a beta-D-galactosyl-N-acylsphingosine + H2O = a ceramide + beta-D-galactose.. It catalyses the reaction beta-D-glucosyl-(1&lt;-&gt;1')-N-hexadecanoylsphing-4-enine + H2O = N-hexadecanoylsphing-4-enine + beta-D-glucose. It carries out the reaction beta-D-galactosyl-(1&lt;-&gt;1')-N-hexadecanoylsphing-4-enine + H2O = beta-D-galactose + N-hexadecanoylsphing-4-enine. The catalysed reaction is beta-D-galactosyl-(1&lt;-&gt;1')-N-hexadecanoylsphinganine + H2O = N-hexadecanoylsphinganine + beta-D-galactose. The enzyme catalyses beta-D-glucosyl-(1&lt;-&gt;1')-N-hexadecanoylsphinganine + H2O = N-hexadecanoylsphinganine + beta-D-glucose. Its function is as follows. Broad specificity glycosidase of the intestinal brush border membrane that hydrolyzes lactose, the main sugar in mammalian milk, to produce D-glucose and D-galactose. The mature protein is composed of two domains that catalyze the hydrolysis of beta-glucopyranosides and beta-galactopyranosides, with a preference for hydrophilic aglycones (in lactose and cellobiose) for one domain and hydrophobic aglycones (in phlorizin and glycosylceramides) for the other. This chain is Lactase/phlorizin hydrolase, found in Rattus norvegicus (Rat).